The chain runs to 440 residues: NK1 transcription factor-related protein 1 (440 aa).

Residues 1 to 13 show a composition bias toward low complexity; that stretch reads MSTSGPAAPGDVP. 3 disordered regions span residues 1 to 82, 145 to 291, and 342 to 387; these read MSTS…RPTS, GVAA…PRRA, and KWKK…PMGA. Over residues 14–31 the composition is skewed to pro residues; it reads ALPPPPPGPGSGPAPPAP. Composition is skewed to low complexity over residues 62-74 and 145-158; these read VPAV…AARP and GVAA…TSAG. The segment covering 170–181 has biased composition (polar residues); it reads GYSSGSGRSPTA. Residues 182 to 198 are compositionally biased toward acidic residues; the sequence is DSEDEAPEDEDEEEAPE. The segment covering 210 to 222 has biased composition (gly residues); it reads GGSGGLGARGSGC. Over residues 237–269 the composition is skewed to low complexity; the sequence is AAPGPRGNSPGAPGPPATATGAGSAGSTPQGAA. The segment at residues 288 to 347 is a DNA-binding region (homeobox); it reads PRRARTAFTYEQLVALENKFKATRYLSVCERLNLALSLSLTETQVKIWFQNRRTKWKKQN. Positions 356–374 are enriched in gly residues; the sequence is TGGGGGPGPGAGPGAGLPG.

This sequence belongs to the NK-1 homeobox family.

It localises to the nucleus. In terms of biological role, may be required for the coordinated crosstalk of factors involved in the maintenance of energy homeostasis, possibly by regulating the transcription of specific factors involved in energy balance. In Mus musculus (Mouse), this protein is NK1 transcription factor-related protein 1.